The chain runs to 429 residues: Formate-dependent phosphoribosylglycinamide formyltransferase (429 aa).

N(1)-(5-phospho-beta-D-ribosyl)glycinamide is bound by residues Glu26–Leu27 and Glu86. Residues Arg118, Lys159, Glu199–Ile202, and Glu207 each bind ATP. Residues Glu123 to Leu319 form the ATP-grasp domain. Glu276 and Glu288 together coordinate Mg(2+). Residues Asp295, Lys375, and Arg382–Arg383 contribute to the N(1)-(5-phospho-beta-D-ribosyl)glycinamide site.

Belongs to the PurK/PurT family. As to quaternary structure, homodimer.

The catalysed reaction is N(1)-(5-phospho-beta-D-ribosyl)glycinamide + formate + ATP = N(2)-formyl-N(1)-(5-phospho-beta-D-ribosyl)glycinamide + ADP + phosphate + H(+). It participates in purine metabolism; IMP biosynthesis via de novo pathway; N(2)-formyl-N(1)-(5-phospho-D-ribosyl)glycinamide from N(1)-(5-phospho-D-ribosyl)glycinamide (formate route): step 1/1. Involved in the de novo purine biosynthesis. Catalyzes the transfer of formate to 5-phospho-ribosyl-glycinamide (GAR), producing 5-phospho-ribosyl-N-formylglycinamide (FGAR). Formate is provided by PurU via hydrolysis of 10-formyl-tetrahydrofolate. This is Formate-dependent phosphoribosylglycinamide formyltransferase from Pyrococcus abyssi (strain GE5 / Orsay).